Reading from the N-terminus, the 429-residue chain is GDP-fucose protein O-fucosyltransferase 2 (429 aa).

Residues M1–A21 form the signal peptide. GDP-beta-L-fucose is bound at residue P53 to N57. E54 functions as the Proton acceptor in the catalytic mechanism. Residues C161 and C192 are joined by a disulfide bond. Residues N189, N209, and N259 are each glycosylated (N-linked (GlcNAc...) asparagine). GDP-beta-L-fucose contacts are provided by residues H292–R294, D371, and T388–F389. Residues C412 and C419 are joined by a disulfide bond.

This sequence belongs to the glycosyltransferase 68 family.

The protein resides in the endoplasmic reticulum. Its subcellular location is the golgi apparatus. The enzyme catalyses L-seryl-[protein] + GDP-beta-L-fucose = 3-O-(alpha-L-fucosyl)-L-seryl-[protein] + GDP + H(+). It carries out the reaction L-threonyl-[protein] + GDP-beta-L-fucose = 3-O-(alpha-L-fucosyl)-L-threonyl-[protein] + GDP + H(+). The protein operates within protein modification; protein glycosylation. Catalyzes the reaction that attaches fucose through an O-glycosidic linkage to a conserved serine or threonine residue in the consensus sequence C1-X-X-S/T-C2 of thrombospondin type I repeats (TSRs) where C1 and C2 are the first and second cysteines of the repeat, respectively. O-fucosylates members of several protein families including the ADAMTS, the thrombospondin (TSP) and spondin families. Required for the proper secretion of ADAMTS family members such as ADAMTSL1 and ADAMTS13. The O-fucosylation of TSRs is also required for restricting epithelial to mesenchymal transition (EMT), maintaining the correct patterning of mesoderm and localization of the definite endoderm. The protein is GDP-fucose protein O-fucosyltransferase 2 (POFUT2) of Pan troglodytes (Chimpanzee).